The following is an 845-amino-acid chain: Cadherin-related family member 5 (845 aa).

The N-terminal stretch at 1-25 (MGSWALLWPPLLFTGLLVRPPGTMA) is a signal peptide. Residues 26–669 (QAQYCSVNKD…DKRFSVVDMA (644 aa)) are Extracellular-facing. 7 N-linked (GlcNAc...) asparagine glycosylation sites follow: Asn-44, Asn-81, Asn-140, Asn-198, Asn-297, Asn-308, and Asn-405. Cadherin domains follow at residues 71–124 (FRIQ…APEF), 125–237 (PFKT…PPWF), 249–354 (IQAQ…PPRF), and 355–459 (PQRL…PPST). The disordered stretch occupies residues 452–661 (SEQEPPSTDV…SSGGGPSEDK (210 aa)). The span at 506–518 (SGTTLRPPTSSTP) shows a compositional bias: low complexity. Asn-526 is a glycosylation site (N-linked (GlcNAc...) asparagine). Polar residues-rich tracts occupy residues 539-549 (TAQTPKPGTSQ), 556-594 (GTSTSHQPATPSGGTAQTPEPGTSQPMPPSMGTSTSHQP), and 602-611 (AQTPEAGTSQ). Tandem repeats lie at residues 540 to 570 (AQTPKPGTSQPMPPGVGTSTSHQPATPSGGT), 571 to 601 (AQTPEPGTSQPMPPSMGTSTSHQPATPGGGT), and 602 to 631 (AQTPEAGTSQPMPPGMGTSTSHQPTTPGGG). The tract at residues 540–645 (AQTPKPGTSQ…PEPGTSQPMP (106 aa)) is 4 X 31 AA approximate tandem repeats. One copy of the 4; truncated repeat lies at 632–645 (TAQTPEPGTSQPMP). The segment covering 633–652 (AQTPEPGTSQPMPLSKSTPS) has biased composition (low complexity). A helical membrane pass occupies residues 670–690 (ALGGVLGALLLLALLGLAVLV). The Cytoplasmic segment spans residues 691-845 (HKHYGPRLKC…DAPGGDDSYI (155 aa)). Residues 691 to 845 (HKHYGPRLKC…DAPGGDDSYI (155 aa)) form a mediates interaction with USH1C and MYO7B and is required for proper localization to microvilli tips and function in microvilli organization region. Positions 724-789 (ANWAPVPSPT…KERRPEGGYK (66 aa)) are disordered. Pro residues predominate over residues 729–762 (VPSPTHDPKPAEAPMPAEPAPPGPASPGGAPEPP). The residue at position 770 (Ser-770) is a Phosphoserine. Thr-810 is subject to Phosphothreonine. The disordered stretch occupies residues 811-845 (LDVDGASDSGSGDEGEGAGRGGGPYDAPGGDDSYI). A phosphoserine mark is found at Ser-817, Ser-819, and Ser-821. Positions 835–845 (YDAPGGDDSYI) are enriched in low complexity.

In terms of assembly, part of the IMAC/intermicrovillar adhesion complex/intermicrovillar tip-link complex composed of ANKS4B, MYO7B, USH1C, CDHR2 and CDHR5. Interacts (via cytoplasmic domain) with USH1C and MYO7B; required for proper localization of CDHR5 to microvilli tips and its function in brush border differentiation. In terms of processing, N- and O-glycosylated. Highest expression in kidney, liver, colon and small intestine. In kidney, expressed apically along brush border of proximal convoluted tubule but not in cortical collecting ducts. Isoform 1 is expressed primarily in adult small intestine and colon. Isoform 2 is highly expressed in fetal liver. Expressed in duodenum with higher expression in enterocytes along the villus axis and lower expression in crypts (at protein level).

Its subcellular location is the apical cell membrane. It localises to the cell projection. The protein localises to the microvillus membrane. Intermicrovillar adhesion molecule that forms, via its extracellular domain, calcium-dependent heterophilic complexes with CDHR2 on adjacent microvilli. Thereby, controls the packing of microvilli at the apical membrane of epithelial cells. Through its cytoplasmic domain, interacts with microvillus cytoplasmic proteins to form the intermicrovillar adhesion complex/IMAC. This complex plays a central role in microvilli and epithelial brush border differentiation. In Homo sapiens (Human), this protein is Cadherin-related family member 5.